Here is a 259-residue protein sequence, read N- to C-terminus: 5'-nucleotidase SurE (259 aa).

The a divalent metal cation site is built by D8, D9, S40, and N92.

It belongs to the SurE nucleotidase family. A divalent metal cation serves as cofactor.

The protein resides in the cytoplasm. It catalyses the reaction a ribonucleoside 5'-phosphate + H2O = a ribonucleoside + phosphate. Functionally, nucleotidase that shows phosphatase activity on nucleoside 5'-monophosphates. This chain is 5'-nucleotidase SurE, found in Xanthomonas campestris pv. campestris (strain B100).